A 97-amino-acid chain; its full sequence is MAKVFTQLQYYPEAIILAQEVHYSGLKKLILEIKEKTTSPPDWNKFSGKVSINEPTTSKSKSKSTSTSTSTSTSTSTSTSTSSSTSSTSSTTSSINK.

The interval 38–97 (TSPPDWNKFSGKVSINEPTTSKSKSKSTSTSTSTSTSTSTSTSTSSSTSSTSSTTSSINK) is disordered. Low complexity predominate over residues 56–97 (TTSKSKSKSTSTSTSTSTSTSTSTSTSSSTSSTSSTTSSINK).

This is an uncharacterized protein from Dictyostelium discoideum (Social amoeba).